Consider the following 858-residue polypeptide: Protein translocase subunit SecA (858 aa).

ATP contacts are provided by residues Q85, 103–107 (GEGKT), and D511. Zn(2+) contacts are provided by C840, C842, C851, and C852.

It belongs to the SecA family. In terms of assembly, monomer and homodimer. Part of the essential Sec protein translocation apparatus which comprises SecA, SecYEG and auxiliary proteins SecDF. Other proteins may also be involved. It depends on Zn(2+) as a cofactor.

It localises to the cell membrane. The protein resides in the cytoplasm. The catalysed reaction is ATP + H2O + cellular proteinSide 1 = ADP + phosphate + cellular proteinSide 2.. In terms of biological role, part of the Sec protein translocase complex. Interacts with the SecYEG preprotein conducting channel. Has a central role in coupling the hydrolysis of ATP to the transfer of proteins into and across the cell membrane, serving as an ATP-driven molecular motor driving the stepwise translocation of polypeptide chains across the membrane. The chain is Protein translocase subunit SecA from Lachnoclostridium phytofermentans (strain ATCC 700394 / DSM 18823 / ISDg) (Clostridium phytofermentans).